A 576-amino-acid polypeptide reads, in one-letter code: Arginine--tRNA ligase (576 aa).

The 'HIGH' region signature appears at 122–132; it reads PNVAKQMHVGH.

Belongs to the class-I aminoacyl-tRNA synthetase family. Monomer.

Its subcellular location is the cytoplasm. The catalysed reaction is tRNA(Arg) + L-arginine + ATP = L-arginyl-tRNA(Arg) + AMP + diphosphate. The chain is Arginine--tRNA ligase from Yersinia enterocolitica serotype O:8 / biotype 1B (strain NCTC 13174 / 8081).